Consider the following 512-residue polypeptide: Methionine--tRNA ligase (512 aa).

The 'HIGH' region signature appears at 11 to 21; that stretch reads YYASGKPHIGH. Residues C126, C129, C143, and H147 each coordinate Zn(2+). Residues 301 to 305 carry the 'KMSKS' region motif; it reads KMSKS. K304 contributes to the ATP binding site.

Belongs to the class-I aminoacyl-tRNA synthetase family. MetG type 2A subfamily. In terms of assembly, monomer. Requires Zn(2+) as cofactor.

Its subcellular location is the cytoplasm. It carries out the reaction tRNA(Met) + L-methionine + ATP = L-methionyl-tRNA(Met) + AMP + diphosphate. Functionally, is required not only for elongation of protein synthesis but also for the initiation of all mRNA translation through initiator tRNA(fMet) aminoacylation. This Mycoplasma pneumoniae (strain ATCC 29342 / M129 / Subtype 1) (Mycoplasmoides pneumoniae) protein is Methionine--tRNA ligase (metG).